The sequence spans 229 residues: V-type proton ATPase subunit E (229 aa).

This sequence belongs to the V-ATPase E subunit family. As to quaternary structure, V-ATPase is a heteromultimeric enzyme composed of a peripheral catalytic V1 complex (components A to H) attached to an integral membrane V0 proton pore complex (components: a, c, c', c'' and d).

Subunit of the peripheral V1 complex of vacuolar ATPase essential for assembly or catalytic function. V-ATPase is responsible for acidifying a variety of intracellular compartments in eukaryotic cells. The sequence is that of V-type proton ATPase subunit E (VATE) from Spinacia oleracea (Spinach).